Reading from the N-terminus, the 147-residue chain is Large ribosomal subunit protein uL15 (147 aa).

The disordered stretch occupies residues 1 to 62 (MKLHELKPAQ…GQQPLSRRMP (62 aa)). 2 stretches are compositionally biased toward gly residues: residues 21-31 (RGIGSGTGKTS) and 42-52 (AGGGVRPGFEG).

The protein belongs to the universal ribosomal protein uL15 family. As to quaternary structure, part of the 50S ribosomal subunit.

In terms of biological role, binds to the 23S rRNA. The polypeptide is Large ribosomal subunit protein uL15 (Desulfitobacterium hafniense (strain DSM 10664 / DCB-2)).